Reading from the N-terminus, the 536-residue chain is MTPSPHDLLHCGMNSQDRDETNGDRQRLVRVALGQEDGDLLVRGAQVVQPVTREVYAADVLVAGGRVAAVGPDLPARARRTVQARGAYLAPGFIDGHIHIESSLLTPASFAAAVLPHGTTAVVAEPHEIVNVLGPAGLNWMLGAGRTSGLRVYASAPSCVPASEFEQGGARVDAAQVAEMLARPGVLGLAEMMNYPGVLGGDAGVWDILNAGRRSGKRLDGHAAGLGGRELLAYAAAGLHSDHEATTPEEARERLRAGLWLMVREGSAARNLAALLPVLRDLPRRALLVSDDVSVDELLELGHLDRLLRTCVAGGLHPADAVALVTSQPAEYWGLHDLGVIAPGYHADFVLLRDLQHFGVLETFVGGEEARPGGETPPLPGGGVDLGPGWDGATFDPPAHWPTLQMFPDQIVTGRAAPGSGDARLVVADRYGRGEWSSCWTLGSGLRGGTLGISILHDAHQVALLGGSDADLRAAGRALERLGGGIVLVVDGEVREQLPLPYAGLMTDHAPAEAAAALGRVTAAARLLGCMPAGRL.

Residues 1 to 24 (MTPSPHDLLHCGMNSQDRDETNGD) are disordered.

It belongs to the metallo-dependent hydrolases superfamily. Adenine deaminase family. Mn(2+) is required as a cofactor.

The enzyme catalyses adenine + H2O + H(+) = hypoxanthine + NH4(+). The protein is Adenine deaminase of Deinococcus radiodurans (strain ATCC 13939 / DSM 20539 / JCM 16871 / CCUG 27074 / LMG 4051 / NBRC 15346 / NCIMB 9279 / VKM B-1422 / R1).